The chain runs to 631 residues: Probable methyltransferase PMT16 (631 aa).

The Cytoplasmic segment spans residues 1-14; the sequence is MNLFTRISSRTKKA. A helical; Signal-anchor for type II membrane protein membrane pass occupies residues 15–35; sequence NLYYVTLVALLCIASYLLGIW. Topologically, residues 36–631 are lumenal; that stretch reads QNTAVNPRAA…EDKNNTSALS (596 aa). 3 N-linked (GlcNAc...) asparagine glycosylation sites follow: asparagine 61, asparagine 230, and asparagine 626.

It belongs to the methyltransferase superfamily.

The protein localises to the endoplasmic reticulum membrane. The protein is Probable methyltransferase PMT16 of Arabidopsis thaliana (Mouse-ear cress).